A 365-amino-acid polypeptide reads, in one-letter code: GTPase Obg (365 aa).

Positions Met1–Leu159 constitute an Obg domain. The OBG-type G domain maps to Ala160–Ala334. GTP-binding positions include Gly166 to Ser173, Phe191 to His195, Asp213 to Gly216, Asn284 to Asp287, and Ser315 to Leu317. Mg(2+) contacts are provided by Ser173 and Thr193.

This sequence belongs to the TRAFAC class OBG-HflX-like GTPase superfamily. OBG GTPase family. In terms of assembly, monomer. Mg(2+) serves as cofactor.

The protein localises to the cytoplasm. Functionally, an essential GTPase which binds GTP, GDP and possibly (p)ppGpp with moderate affinity, with high nucleotide exchange rates and a fairly low GTP hydrolysis rate. Plays a role in control of the cell cycle, stress response, ribosome biogenesis and in those bacteria that undergo differentiation, in morphogenesis control. This Cupriavidus metallidurans (strain ATCC 43123 / DSM 2839 / NBRC 102507 / CH34) (Ralstonia metallidurans) protein is GTPase Obg.